We begin with the raw amino-acid sequence, 336 residues long: NADH-quinone oxidoreductase subunit H (336 aa).

8 helical membrane passes run 4-24 (YILW…LVVA), 75-95 (YLFF…WAVI), 108-128 (LGLL…VIAG), 154-174 (MGFA…TGII), 181-201 (IWHW…IAGI), 233-253 (LFFL…SIMF), 272-292 (FVPG…MFLW), and 308-328 (LGWK…ACMV).

Belongs to the complex I subunit 1 family. As to quaternary structure, NDH-1 is composed of 14 different subunits. Subunits NuoA, H, J, K, L, M, N constitute the membrane sector of the complex.

The protein localises to the cell inner membrane. The enzyme catalyses a quinone + NADH + 5 H(+)(in) = a quinol + NAD(+) + 4 H(+)(out). Its function is as follows. NDH-1 shuttles electrons from NADH, via FMN and iron-sulfur (Fe-S) centers, to quinones in the respiratory chain. The immediate electron acceptor for the enzyme in this species is believed to be ubiquinone. Couples the redox reaction to proton translocation (for every two electrons transferred, four hydrogen ions are translocated across the cytoplasmic membrane), and thus conserves the redox energy in a proton gradient. This subunit may bind ubiquinone. The protein is NADH-quinone oxidoreductase subunit H of Francisella tularensis subsp. mediasiatica (strain FSC147).